A 633-amino-acid polypeptide reads, in one-letter code: DNA mismatch repair protein MutL (633 aa).

Disordered stretches follow at residues 337–364 and 383–405; these read RPDD…GEFG and VGWS…TRPE. Over residues 385 to 396 the composition is skewed to gly residues; sequence WSGGSSASGGSS.

Belongs to the DNA mismatch repair MutL/HexB family.

In terms of biological role, this protein is involved in the repair of mismatches in DNA. It is required for dam-dependent methyl-directed DNA mismatch repair. May act as a 'molecular matchmaker', a protein that promotes the formation of a stable complex between two or more DNA-binding proteins in an ATP-dependent manner without itself being part of a final effector complex. The chain is DNA mismatch repair protein MutL from Pseudomonas aeruginosa (strain LESB58).